The primary structure comprises 657 residues: Kinesin-like protein KIF22 (657 aa).

The segment at 1–33 (MNVRAKKKPQQREMASASSGPSRSLSKGGVSRR) is disordered. The span at 16–33 (SASSGPSRSLSKGGVSRR) shows a compositional bias: low complexity. The Kinesin motor domain maps to 38 to 360 (RVRVAVRLRP…LNFTARSKEV (323 aa)). Position 119 to 126 (119 to 126 (GPTGAGKT)) interacts with ATP. Residues 388–415 (PSEAKKAKGPEEESTGSPESTAAPASAS) form a disordered region. Over residues 402 to 415 (TGSPESTAAPASAS) the composition is skewed to low complexity. Phosphoserine is present on residues Ser404, Ser419, and Ser444. A Glycyl lysine isopeptide (Lys-Gly) (interchain with G-Cter in SUMO2) cross-link involves residue Lys457. A coiled-coil region spans residues 457–502 (KRERMVLIKTVEEKNLEIERLKMKQKELEAKVLAQEALDPKEKENT). Ser537, Ser554, and Ser573 each carry phosphoserine.

It belongs to the TRAFAC class myosin-kinesin ATPase superfamily. Kinesin family. As to quaternary structure, interacts with FAM83D and SIAH1. Ubiquitinated; mediated by SIAH1 and leading to its subsequent proteasomal degradation.

Its subcellular location is the nucleus. The protein localises to the cytoplasm. It is found in the cytoskeleton. Its function is as follows. Kinesin family member that is involved in spindle formation and the movements of chromosomes during mitosis and meiosis. Binds to microtubules and to DNA. Plays a role in congression of laterally attached chromosomes in NDC80-depleted cells. The chain is Kinesin-like protein KIF22 (Kif22) from Rattus norvegicus (Rat).